We begin with the raw amino-acid sequence, 126 residues long: Small ribosomal subunit protein eS8 (126 aa).

Residues 1–10 (MAIWQGSSLR) are compositionally biased toward polar residues. The segment at 1-35 (MAIWQGSSLRKPSGARSRRNKNKRNAEFGRNPAET) is disordered.

Belongs to the eukaryotic ribosomal protein eS8 family. Part of the 30S ribosomal subunit.

This Methanosphaera stadtmanae (strain ATCC 43021 / DSM 3091 / JCM 11832 / MCB-3) protein is Small ribosomal subunit protein eS8.